The primary structure comprises 273 residues: Peptidyl-prolyl cis-trans isomerase E (273 aa).

The RRM domain maps to 1–48; sequence MPMDYQTEKHRGFAFVEFEEVEDAMSAIDNMNESEIFGRTIRVNVARP. The tract at residues 77–103 is disordered; sequence RKLDEPDIVNPSDTSENVEDLSDEEMR. The region spanning 115–271 is the PPIase cyclophilin-type domain; sequence FFDIRIGNGD…EPVIISRCGE (157 aa).

It belongs to the cyclophilin-type PPIase family. PPIase E subfamily.

The protein localises to the cytoplasm. The enzyme catalyses [protein]-peptidylproline (omega=180) = [protein]-peptidylproline (omega=0). Binds cyclosporin A (CsA). CsA mediates some of its effects via an inhibitory action on PPIase. Its function is as follows. PPIases accelerate the folding of proteins. It catalyzes the cis-trans isomerization of proline imidic peptide bonds in oligopeptides. This Schistosoma mansoni (Blood fluke) protein is Peptidyl-prolyl cis-trans isomerase E.